The following is a 142-amino-acid chain: Hemoglobin subunit alpha (142 aa).

Residues 2–142 form the Globin domain; that stretch reads VLSDANKQEI…LVHQLSSKYR (141 aa). His-60 contacts O2. His-89 contributes to the heme b binding site.

The protein belongs to the globin family. Heterotetramer of two alpha chains and two beta chains. Red blood cells.

In terms of biological role, involved in oxygen transport from gills to the various peripheral tissues. The protein is Hemoglobin subunit alpha (HBA) of Bathyraja eatonii (Eaton's skate).